The sequence spans 408 residues: Peptidase T (408 aa).

Zn(2+) is bound at residue histidine 78. Residue aspartate 80 is part of the active site. Aspartate 140 lines the Zn(2+) pocket. Glutamate 173 serves as the catalytic Proton acceptor. The Zn(2+) site is built by glutamate 174, aspartate 196, and histidine 379.

It belongs to the peptidase M20B family. The cofactor is Zn(2+).

It is found in the cytoplasm. The catalysed reaction is Release of the N-terminal residue from a tripeptide.. Functionally, cleaves the N-terminal amino acid of tripeptides. The protein is Peptidase T of Escherichia coli O9:H4 (strain HS).